We begin with the raw amino-acid sequence, 101 residues long: NADH-quinone oxidoreductase subunit K (101 aa).

A run of 3 helical transmembrane segments spans residues 4 to 24 (LSHY…GIFL), 30 to 50 (IILL…FVAF), and 61 to 81 (IFVF…LAIL).

Belongs to the complex I subunit 4L family. NDH-1 is composed of 14 different subunits. Subunits NuoA, H, J, K, L, M, N constitute the membrane sector of the complex.

The protein localises to the cell inner membrane. The enzyme catalyses a quinone + NADH + 5 H(+)(in) = a quinol + NAD(+) + 4 H(+)(out). NDH-1 shuttles electrons from NADH, via FMN and iron-sulfur (Fe-S) centers, to quinones in the respiratory chain. The immediate electron acceptor for the enzyme in this species is believed to be ubiquinone. Couples the redox reaction to proton translocation (for every two electrons transferred, four hydrogen ions are translocated across the cytoplasmic membrane), and thus conserves the redox energy in a proton gradient. The chain is NADH-quinone oxidoreductase subunit K from Nitrosomonas europaea (strain ATCC 19718 / CIP 103999 / KCTC 2705 / NBRC 14298).